The following is a 257-amino-acid chain: Imidazole glycerol phosphate synthase subunit HisF (257 aa).

Catalysis depends on residues D11 and D130.

Belongs to the HisA/HisF family. In terms of assembly, heterodimer of HisH and HisF.

It is found in the cytoplasm. It catalyses the reaction 5-[(5-phospho-1-deoxy-D-ribulos-1-ylimino)methylamino]-1-(5-phospho-beta-D-ribosyl)imidazole-4-carboxamide + L-glutamine = D-erythro-1-(imidazol-4-yl)glycerol 3-phosphate + 5-amino-1-(5-phospho-beta-D-ribosyl)imidazole-4-carboxamide + L-glutamate + H(+). It functions in the pathway amino-acid biosynthesis; L-histidine biosynthesis; L-histidine from 5-phospho-alpha-D-ribose 1-diphosphate: step 5/9. In terms of biological role, IGPS catalyzes the conversion of PRFAR and glutamine to IGP, AICAR and glutamate. The HisF subunit catalyzes the cyclization activity that produces IGP and AICAR from PRFAR using the ammonia provided by the HisH subunit. The chain is Imidazole glycerol phosphate synthase subunit HisF from Psychromonas ingrahamii (strain DSM 17664 / CCUG 51855 / 37).